Reading from the N-terminus, the 250-residue chain is 3-deoxy-manno-octulosonate cytidylyltransferase (250 aa).

It belongs to the KdsB family.

Its subcellular location is the cytoplasm. The catalysed reaction is 3-deoxy-alpha-D-manno-oct-2-ulosonate + CTP = CMP-3-deoxy-beta-D-manno-octulosonate + diphosphate. It participates in nucleotide-sugar biosynthesis; CMP-3-deoxy-D-manno-octulosonate biosynthesis; CMP-3-deoxy-D-manno-octulosonate from 3-deoxy-D-manno-octulosonate and CTP: step 1/1. Its pathway is bacterial outer membrane biogenesis; lipopolysaccharide biosynthesis. Activates KDO (a required 8-carbon sugar) for incorporation into bacterial lipopolysaccharide in Gram-negative bacteria. This Syntrophobacter fumaroxidans (strain DSM 10017 / MPOB) protein is 3-deoxy-manno-octulosonate cytidylyltransferase.